The chain runs to 395 residues: E3 ubiquitin-protein ligase NHLRC1 (395 aa).

Residues 26–72 form an RING-type zinc finger; sequence CKVCFEKFGHRQQRRPRNLSCGHVVCLACVAALAHPRTLALECPFCR. NHL repeat units lie at residues 113–157, 161–204, 205–245, 248–300, 301–349, and 350–393; these read ALTC…FDSG, AHQF…FDFF, GQIK…LDVD, EGVL…FSSS, MQLV…LGKP, and EEFP…YKVD.

In terms of assembly, interacts with AGL. Interacts (via the NHL repeats) with EPM2A/laforin. Forms a complex with EPM2A/laforin and HSP70. Interacts with PRDM8. In terms of tissue distribution, expressed in brain, cerebellum, spinal cord, medulla, heart, liver, skeletal muscle and pancreas.

It is found in the endoplasmic reticulum. The protein resides in the nucleus. It catalyses the reaction S-ubiquitinyl-[E2 ubiquitin-conjugating enzyme]-L-cysteine + [acceptor protein]-L-lysine = [E2 ubiquitin-conjugating enzyme]-L-cysteine + N(6)-ubiquitinyl-[acceptor protein]-L-lysine.. The protein operates within protein modification; protein ubiquitination. E3 ubiquitin-protein ligase. Together with the phosphatase EPM2A/laforin, appears to be involved in the clearance of toxic polyglucosan and protein aggregates via multiple pathways. In complex with EPM2A/laforin and HSP70, suppresses the cellular toxicity of misfolded proteins by promoting their degradation through the ubiquitin-proteasome system (UPS). Ubiquitinates the glycogen-targeting protein phosphatase subunits PPP1R3C/PTG and PPP1R3D in a laforin-dependent manner and targets them for proteasome-dependent degradation, thus decreasing glycogen accumulation. Polyubiquitinates EPM2A/laforin and ubiquitinates AGL and targets them for proteasome-dependent degradation. Also promotes proteasome-independent protein degradation through the macroautophagy pathway. The polypeptide is E3 ubiquitin-protein ligase NHLRC1 (NHLRC1) (Homo sapiens (Human)).